We begin with the raw amino-acid sequence, 412 residues long: Probable ribonuclease FAU-1 (412 aa).

This sequence belongs to the FAU-1 family.

Probable RNase involved in rRNA stability through maturation and/or degradation of precursor rRNAs. Binds to RNA in loop regions with AU-rich sequences. The chain is Probable ribonuclease FAU-1 from Sulfurisphaera tokodaii (strain DSM 16993 / JCM 10545 / NBRC 100140 / 7) (Sulfolobus tokodaii).